The following is a 272-amino-acid chain: 3-methyl-2-oxobutanoate hydroxymethyltransferase (272 aa).

2 residues coordinate Mg(2+): Asp-43 and Asp-82. 3-methyl-2-oxobutanoate contacts are provided by residues 43–44 (DS), Asp-82, and Lys-112. Residue Glu-114 participates in Mg(2+) binding. Glu-179 acts as the Proton acceptor in catalysis.

The protein belongs to the PanB family. In terms of assembly, homodecamer; pentamer of dimers. Mg(2+) serves as cofactor.

The protein resides in the cytoplasm. It catalyses the reaction 3-methyl-2-oxobutanoate + (6R)-5,10-methylene-5,6,7,8-tetrahydrofolate + H2O = 2-dehydropantoate + (6S)-5,6,7,8-tetrahydrofolate. The protein operates within cofactor biosynthesis; (R)-pantothenate biosynthesis; (R)-pantoate from 3-methyl-2-oxobutanoate: step 1/2. Catalyzes the reversible reaction in which hydroxymethyl group from 5,10-methylenetetrahydrofolate is transferred onto alpha-ketoisovalerate to form ketopantoate. This is 3-methyl-2-oxobutanoate hydroxymethyltransferase from Staphylococcus epidermidis (strain ATCC 35984 / DSM 28319 / BCRC 17069 / CCUG 31568 / BM 3577 / RP62A).